Reading from the N-terminus, the 71-residue chain is Large ribosomal subunit protein uL29 (71 aa).

The protein belongs to the universal ribosomal protein uL29 family. In terms of assembly, part of the 50S ribosomal subunit. Interacts with protein L23.

Its function is as follows. Stabilizes the tertiary rRNA structure within the 23S rRNA domain (domain I) to which it binds. Located at the polypeptide exit tunnel on the outside of the subunit. The protein is Large ribosomal subunit protein uL29 (rpl29) of Haloarcula marismortui (strain ATCC 43049 / DSM 3752 / JCM 8966 / VKM B-1809) (Halobacterium marismortui).